We begin with the raw amino-acid sequence, 454 residues long: Innexin-19 (454 aa).

The Cytoplasmic portion of the chain corresponds to 1-48 (MWRTPASTGPLRQDRQMFFHATLARSFINALSVRGDDDAVDRLNYYYT). A helical membrane pass occupies residues 49–69 (PLILAVCCLVISAKQYGGTPI). Residues 70–118 (ECWVNPHSRESMEEYIESYCWIQNTYWIPMYENVPDDHTAREEKQIGYY) are Extracellular-facing. The chain crosses the membrane as a helical span at residues 119 to 139 (QWVPFILIAEALMFSLPCIFW). The Cytoplasmic segment spans residues 140-214 (RLCSFQSGLN…SRFLSGQCLS (75 aa)). The chain crosses the membrane as a helical span at residues 215 to 235 (ILHSFTKLLYSMNVVAQFLIL). At 236–300 (NACLKSSDFL…ALLINIINEK (65 aa)) the chain is on the extracellular side. A helical membrane pass occupies residues 301–321 (VFAFLWCWYMILAIITTCSFI). Residues 322–454 (YWIANSFIHS…SNPGQTKSFL (133 aa)) lie on the Cytoplasmic side of the membrane.

Belongs to the pannexin family. In terms of tissue distribution, specifically expressed in sensory neurons and interneurons in the head and tail. Expressed in neurons AWC, ASH, AFD, ASI, ADL, ASK, BAG, AWB, and ADF (head sensory neurons); ADA, AIZ, RIC, AIY, and AIM (head interneurons); PHA and PHB (tail sensory neurons); and PVC and PVQ (tail interneurons).

Its subcellular location is the cell membrane. It localises to the cell junction. The protein localises to the gap junction. In terms of biological role, structural component of the gap junctions that specifically coordinates left-right asymmetry in the developing nervous system. Acts by forming gap junction network linking embryonic neurons and providing electrical coupling between cells, leading to promote or inhibit AWC signaling. Required for the left and right AWC olfactory neurons to establish asymmetric patterns of gene expression during embryogenesis. Acts autonomously. In Caenorhabditis elegans, this protein is Innexin-19 (inx-19).